Here is a 257-residue protein sequence, read N- to C-terminus: Glucose-1-phosphate cytidylyltransferase (257 aa).

Residues 6 to 10 (LAGGL), 11 to 13 (GTR), K23, S104, R109, and G128 each bind substrate. 2 residues coordinate Mg(2+): D129 and D234.

Belongs to the glucose-1-phosphate cytidylyltransferase family. Homohexamer. Mg(2+) serves as cofactor.

The catalysed reaction is alpha-D-glucose 1-phosphate + CTP + H(+) = CDP-D-glucose + diphosphate. It participates in nucleotide-sugar biosynthesis; CDP-3,6-dideoxy-D-mannose biosynthesis; CDP-3,6-dideoxy-D-mannose from CTP and alpha-D-glucose 1-phosphate: step 1/5. Its pathway is bacterial outer membrane biogenesis; LPS O-antigen biosynthesis. In terms of biological role, involved in the biosynthesis of the tyvelose, a 3,6-dideoxyhexose found in the O-antigen of the surface lipopolysaccharides. It catalyzes the transfer of a CMP moiety from CTP to glucose 1-phosphate. The chain is Glucose-1-phosphate cytidylyltransferase (rfbF) from Salmonella typhimurium (strain LT2 / SGSC1412 / ATCC 700720).